The primary structure comprises 148 residues: Putative pre-16S rRNA nuclease (148 aa).

This sequence belongs to the YqgF nuclease family.

It localises to the cytoplasm. Its function is as follows. Could be a nuclease involved in processing of the 5'-end of pre-16S rRNA. The polypeptide is Putative pre-16S rRNA nuclease (Chromohalobacter salexigens (strain ATCC BAA-138 / DSM 3043 / CIP 106854 / NCIMB 13768 / 1H11)).